Consider the following 71-residue polypeptide: Large ribosomal subunit protein uL29 (71 aa).

Belongs to the universal ribosomal protein uL29 family. Part of the 50S ribosomal subunit. Interacts with protein L23.

Stabilizes the tertiary rRNA structure within the 23S rRNA domain (domain I) to which it binds. Located at the polypeptide exit tunnel on the outside of the subunit. This is Large ribosomal subunit protein uL29 (rpl29) from Haloarcula marismortui (strain ATCC 43049 / DSM 3752 / JCM 8966 / VKM B-1809) (Halobacterium marismortui).